The chain runs to 377 residues: Chaperone protein DnaJ (377 aa).

One can recognise a J domain in the interval 5–70; that stretch reads DYYEVLGVGR…NKKAAYDQFG (66 aa). The CR-type zinc-finger motif lies at 133-211; the sequence is GLTKELRIPT…CHGDGRVEKT (79 aa). Residues cysteine 146, cysteine 149, cysteine 163, cysteine 166, cysteine 185, cysteine 188, cysteine 199, and cysteine 202 each contribute to the Zn(2+) site. CXXCXGXG motif repeat units lie at residues 146 to 153, 163 to 170, 185 to 192, and 199 to 206; these read CDVCDGSG, CGTCHGQG, CPTCHGRG, and CTKCHGDG.

It belongs to the DnaJ family. As to quaternary structure, homodimer. It depends on Zn(2+) as a cofactor.

It localises to the cytoplasm. In terms of biological role, participates actively in the response to hyperosmotic and heat shock by preventing the aggregation of stress-denatured proteins and by disaggregating proteins, also in an autonomous, DnaK-independent fashion. Unfolded proteins bind initially to DnaJ; upon interaction with the DnaJ-bound protein, DnaK hydrolyzes its bound ATP, resulting in the formation of a stable complex. GrpE releases ADP from DnaK; ATP binding to DnaK triggers the release of the substrate protein, thus completing the reaction cycle. Several rounds of ATP-dependent interactions between DnaJ, DnaK and GrpE are required for fully efficient folding. Also involved, together with DnaK and GrpE, in the DNA replication of plasmids through activation of initiation proteins. This is Chaperone protein DnaJ from Shewanella sp. (strain MR-4).